We begin with the raw amino-acid sequence, 80 residues long: MRTLLLTLVVVTIVCLDLGNSLICYVTRDGKTATCPPGQKCEKYAVSASHTGHWFHRWHCTSTCHEGPYNVCCSTDFCNR.

An N-terminal signal peptide occupies residues 1–21; the sequence is MRTLLLTLVVVTIVCLDLGNS. 4 disulfide bridges follow: Cys-24–Cys-41, Cys-35–Cys-60, Cys-64–Cys-72, and Cys-73–Cys-78.

It belongs to the three-finger toxin family. Short-chain subfamily. In terms of tissue distribution, expressed by the venom gland.

Its subcellular location is the secreted. Neurotoxin. Blocks muscular nicotinic acetylcholine receptors (nAChR). The sequence is that of Three-finger toxin MALT0059C from Micrurus altirostris (Uruguayan coral snake).